The following is a 97-amino-acid chain: Putative regulatory protein Dole_1911 (97 aa).

The protein belongs to the RemA family.

The protein is Putative regulatory protein Dole_1911 of Desulfosudis oleivorans (strain DSM 6200 / JCM 39069 / Hxd3) (Desulfococcus oleovorans).